We begin with the raw amino-acid sequence, 171 residues long: T-cell surface glycoprotein CD3 delta chain (171 aa).

The N-terminal stretch at 1 to 21 is a signal peptide; that stretch reads MEHSRFLSGLILAAFLSRVSP. Topologically, residues 22 to 104 are extracellular; the sequence is YEVEMEELED…NCVELDSATL (83 aa). Residues Cys37 and Cys72 are joined by a disulfide bond. Asn38 is a glycosylation site (N-linked (GlcNAc...) asparagine). Residues 105-125 traverse the membrane as a helical segment; sequence AGIIVTDIIATLLLALGVYCF. At 126 to 171 the chain is on the cytoplasmic side; that stretch reads AGHEMGRFSRAADTQDLLRNDQLYQPLRDRNDGQYSRLGENWARNK. Residues 138–166 form the ITAM domain; sequence DTQDLLRNDQLYQPLRDRNDGQYSRLGEN. Residues Tyr149 and Tyr160 each carry the phosphotyrosine modification.

The TCR-CD3 complex is composed of a CD3D/CD3E and a CD3G/CD3E heterodimers that preferentially associate with TCRalpha and TCRbeta, respectively, to form TCRalpha/CD3E/CD3G and TCRbeta/CD3G/CD3E trimers. In turn, the hexamer interacts with CD3Z homodimer to form the TCR-CD3 complex. Alternatively, TCRalpha and TCRbeta can be replaced by TCRgamma and TCRdelta. Interacts with coreceptors CD4 and CD8. In terms of processing, phosphorylated on Tyr residues after T-cell receptor triggering by LCK in association with CD4/CD8. CD3D is mostly present on T-lymphocytes with its TCR-CD3 partners. Present also in fetal NK-cells.

The protein resides in the cell membrane. Its function is as follows. Part of the TCR-CD3 complex present on T-lymphocyte cell surface that plays an essential role in adaptive immune response. When antigen presenting cells (APCs) activate T-cell receptor (TCR), TCR-mediated signals are transmitted across the cell membrane by the CD3 chains CD3D, CD3E, CD3G and CD3Z. All CD3 chains contain immunoreceptor tyrosine-based activation motifs (ITAMs) in their cytoplasmic domain. Upon TCR engagement, these motifs become phosphorylated by Src family protein tyrosine kinases LCK and FYN, resulting in the activation of downstream signaling pathways. In addition of this role of signal transduction in T-cell activation, CD3D plays an essential role in thymocyte differentiation. Indeed, participates in correct intracellular TCR-CD3 complex assembly and surface expression. In absence of a functional TCR-CD3 complex, thymocytes are unable to differentiate properly. Interacts with CD4 and CD8 and thus serves to establish a functional link between the TCR and coreceptors CD4 and CD8, which is needed for activation and positive selection of CD4 or CD8 T-cells. The sequence is that of T-cell surface glycoprotein CD3 delta chain (CD3D) from Sus scrofa (Pig).